We begin with the raw amino-acid sequence, 89 residues long: MLQRDTTIINKLGLHARASAKLTQLAGNFVSQVKMSRNGRQVDAKSIMGVMMLAAGIGSTVTLETDGPDEQEAMDALLALIANRFGEGE.

One can recognise an HPr domain in the interval 1 to 88 (MLQRDTTIIN…ALIANRFGEG (88 aa)). The Pros-phosphohistidine intermediate role is filled by histidine 15.

This sequence belongs to the HPr family.

The protein resides in the cytoplasm. Its function is as follows. General (non sugar-specific) component of the phosphoenolpyruvate-dependent sugar phosphotransferase system (sugar PTS). This major carbohydrate active-transport system catalyzes the phosphorylation of incoming sugar substrates concomitantly with their translocation across the cell membrane. The phosphoryl group from phosphoenolpyruvate (PEP) is transferred to the phosphoryl carrier protein HPr by enzyme I. Phospho-HPr then transfers it to the PTS EIIA domain. This chain is Phosphocarrier protein HPr (phbH), found in Cupriavidus necator (strain ATCC 17699 / DSM 428 / KCTC 22496 / NCIMB 10442 / H16 / Stanier 337) (Ralstonia eutropha).